We begin with the raw amino-acid sequence, 447 residues long: UDP-N-acetylmuramate--L-alanine ligase (447 aa).

115-121 contacts ATP; the sequence is GAHGKTS.

Belongs to the MurCDEF family.

Its subcellular location is the cytoplasm. It catalyses the reaction UDP-N-acetyl-alpha-D-muramate + L-alanine + ATP = UDP-N-acetyl-alpha-D-muramoyl-L-alanine + ADP + phosphate + H(+). The protein operates within cell wall biogenesis; peptidoglycan biosynthesis. In terms of biological role, cell wall formation. The chain is UDP-N-acetylmuramate--L-alanine ligase from Streptococcus thermophilus (strain CNRZ 1066).